A 1071-amino-acid polypeptide reads, in one-letter code: DNA-directed RNA polymerase subunit beta (1071 aa).

This sequence belongs to the RNA polymerase beta chain family. As to quaternary structure, in plastids the minimal PEP RNA polymerase catalytic core is composed of four subunits: alpha, beta, beta', and beta''. When a (nuclear-encoded) sigma factor is associated with the core the holoenzyme is formed, which can initiate transcription.

Its subcellular location is the plastid. It is found in the chloroplast. It carries out the reaction RNA(n) + a ribonucleoside 5'-triphosphate = RNA(n+1) + diphosphate. Its function is as follows. DNA-dependent RNA polymerase catalyzes the transcription of DNA into RNA using the four ribonucleoside triphosphates as substrates. This Nymphaea alba (White water-lily) protein is DNA-directed RNA polymerase subunit beta.